Consider the following 314-residue polypeptide: Nodulation protein D 1 (314 aa).

Residues 6 to 63 (LDLNLLVALDAVMTARNLTAAARKINLSQPAMSAAIARLRTYFRDELFTMRGRELVPT) enclose the HTH lysR-type domain. Positions 23-42 (LTAAARKINLSQPAMSAAIA) form a DNA-binding region, H-T-H motif.

Belongs to the LysR transcriptional regulatory family.

Its function is as follows. NodD regulates the expression of the nodABCFE genes which encode other nodulation proteins. NodD is also a negative regulator of its own expression. Binds flavonoids as inducers. The sequence is that of Nodulation protein D 1 (nodD1) from Bradyrhizobium diazoefficiens (strain JCM 10833 / BCRC 13528 / IAM 13628 / NBRC 14792 / USDA 110).